A 440-amino-acid chain; its full sequence is Xaa-Pro dipeptidase (440 aa).

Mn(2+) is bound by residues Asp246, Asp257, His337, Glu382, and Glu421.

The protein belongs to the peptidase M24B family. Bacterial-type prolidase subfamily. It depends on Mn(2+) as a cofactor.

It catalyses the reaction Xaa-L-Pro dipeptide + H2O = an L-alpha-amino acid + L-proline. Its function is as follows. Splits dipeptides with a prolyl residue in the C-terminal position. The chain is Xaa-Pro dipeptidase from Aeromonas hydrophila subsp. hydrophila (strain ATCC 7966 / DSM 30187 / BCRC 13018 / CCUG 14551 / JCM 1027 / KCTC 2358 / NCIMB 9240 / NCTC 8049).